The chain runs to 232 residues: Dephospho-CoA kinase (232 aa).

The DPCK domain occupies 3–206 (IVGLTGGIAS…RPLTWIEFWR (204 aa)). Residue 8-15 (GGIASGKS) participates in ATP binding.

This sequence belongs to the CoaE family.

It is found in the peroxisome. It catalyses the reaction 3'-dephospho-CoA + ATP = ADP + CoA + H(+). It functions in the pathway cofactor biosynthesis; coenzyme A biosynthesis; CoA from (R)-pantothenate: step 5/5. Its function is as follows. Catalyzes the phosphorylation of the 3'-hydroxyl group of dephosphocoenzyme A to form coenzyme A. The sequence is that of Dephospho-CoA kinase from Arabidopsis thaliana (Mouse-ear cress).